The chain runs to 537 residues: Chaperonin GroEL 1 (537 aa).

Residues 29 to 32, 86 to 90, glycine 413, 478 to 480, and aspartate 494 each bind ATP; these read TLGP, DGTTT, and NAA.

The protein belongs to the chaperonin (HSP60) family. As to quaternary structure, forms a cylinder of 14 subunits composed of two heptameric rings stacked back-to-back. Interacts with the co-chaperonin GroES.

It localises to the cytoplasm. It carries out the reaction ATP + H2O + a folded polypeptide = ADP + phosphate + an unfolded polypeptide.. Functionally, together with its co-chaperonin GroES, plays an essential role in assisting protein folding. The GroEL-GroES system forms a nano-cage that allows encapsulation of the non-native substrate proteins and provides a physical environment optimized to promote and accelerate protein folding. The polypeptide is Chaperonin GroEL 1 (Corynebacterium efficiens (strain DSM 44549 / YS-314 / AJ 12310 / JCM 11189 / NBRC 100395)).